A 77-amino-acid polypeptide reads, in one-letter code: Liver-expressed antimicrobial peptide 2 (77 aa).

An N-terminal signal peptide occupies residues 1-22 (MWHLKLFAVLVICLLLAVQVHG). The propeptide occupies 23–37 (SPIPELSSAKRRPRR). 2 disulfide bridges follow: Cys-54–Cys-65 and Cys-60–Cys-70.

The protein belongs to the LEAP2 family.

It is found in the secreted. In terms of biological role, has an antimicrobial activity. The polypeptide is Liver-expressed antimicrobial peptide 2 (LEAP2) (Sus scrofa (Pig)).